The following is a 185-amino-acid chain: Putative RNA (cytidine(34)-2'-O)-methyltransferase (185 aa).

S-adenosyl-L-methionine contacts are provided by I80, G105, and I126.

This sequence belongs to the class IV-like SAM-binding methyltransferase superfamily. RNA methyltransferase TrmH family. TrmL subfamily.

It is found in the cytoplasm. The catalysed reaction is cytidine(34) in tRNA + S-adenosyl-L-methionine = 2'-O-methylcytidine(34) in tRNA + S-adenosyl-L-homocysteine + H(+). It catalyses the reaction 5-carboxymethylaminomethyluridine(34) in tRNA(Leu) + S-adenosyl-L-methionine = 5-carboxymethylaminomethyl-2'-O-methyluridine(34) in tRNA(Leu) + S-adenosyl-L-homocysteine + H(+). In terms of biological role, could methylate the ribose at the nucleotide 34 wobble position in tRNA. The chain is Putative RNA (cytidine(34)-2'-O)-methyltransferase from Lactobacillus gasseri (strain ATCC 33323 / DSM 20243 / BCRC 14619 / CIP 102991 / JCM 1131 / KCTC 3163 / NCIMB 11718 / NCTC 13722 / AM63).